Here is a 334-residue protein sequence, read N- to C-terminus: Probable quinone oxidoreductase (334 aa).

The protein belongs to the zinc-containing alcohol dehydrogenase family. Quinone oxidoreductase subfamily.

It carries out the reaction 2 a quinone + NADPH + H(+) = 2 a 1,4-benzosemiquinone + NADP(+). The polypeptide is Probable quinone oxidoreductase (ZTA1) (Saccharomyces cerevisiae (strain ATCC 204508 / S288c) (Baker's yeast)).